The sequence spans 315 residues: Prephenate dehydratase (315 aa).

The region spanning 3-189 (RIAYLGPEGT…ARTRFVLVGP (187 aa)) is the Prephenate dehydratase domain. An ACT domain is found at 203-280 (SVVLRIDNAP…ADVRYLGSWP (78 aa)).

In terms of assembly, homodimer.

It carries out the reaction prephenate + H(+) = 3-phenylpyruvate + CO2 + H2O. It participates in amino-acid biosynthesis; L-phenylalanine biosynthesis; phenylpyruvate from prephenate: step 1/1. In Mycobacterium avium (strain 104), this protein is Prephenate dehydratase (pheA).